The sequence spans 191 residues: Ribonuclease HII (191 aa).

The RNase H type-2 domain maps to 16-191; the sequence is INLIGIDEAG…KLHRKSFKLL (176 aa). Positions 22, 23, and 110 each coordinate a divalent metal cation.

This sequence belongs to the RNase HII family. It depends on Mn(2+) as a cofactor. Mg(2+) is required as a cofactor.

It localises to the cytoplasm. It carries out the reaction Endonucleolytic cleavage to 5'-phosphomonoester.. Its function is as follows. Endonuclease that specifically degrades the RNA of RNA-DNA hybrids. The chain is Ribonuclease HII from Campylobacter jejuni subsp. doylei (strain ATCC BAA-1458 / RM4099 / 269.97).